Reading from the N-terminus, the 1776-residue chain is 6-methylsalicylic acid synthase (1776 aa).

Residues 1 to 18 (MHSVSPSTYPSGGTSPAP) are compositionally biased toward low complexity. The tract at residues 1–26 (MHSVSPSTYPSGGTSPAPADTPGTEY) is disordered. The Ketosynthase family 3 (KS3) domain maps to 32 to 457 (SNDVAVVGMA…GTVSHAVIEE (426 aa)). Catalysis depends on for beta-ketoacyl synthase activity residues cysteine 204, histidine 339, and histidine 379. Residues 567 to 880 (VWVFSGHGAQ…IAQLHCRGAE (314 aa)) are malonyl-CoA:ACP transacylase (MAT) domain. The interval 925–1044 (HTLLGQRIPV…AYWDRKVLGS (120 aa)) is N-terminal hotdog fold. Positions 925 to 1196 (HTLLGQRIPV…FTAMRFSEIE (272 aa)) are dehydratase (DH) domain. In terms of domain architecture, PKS/mFAS DH spans 925–1201 (HTLLGQRIPV…FSEIEGTPGV (277 aa)). Catalysis depends on histidine 957, which acts as the Proton acceptor; for dehydratase activity. The interval 1058 to 1201 (TTKLADNFSI…FSEIEGTPGV (144 aa)) is C-terminal hotdog fold. The active-site Proton donor; for dehydratase activity is the aspartate 1113. A product template (PT) domain region spans residues 1205 to 1657 (MESLVHQIAW…LRSLAIDDGE (453 aa)). In terms of domain architecture, Carrier spans 1700 to 1774 (AYLDEKIRGC…HLVVWFAEKI (75 aa)). Position 1734 is an O-(pantetheine 4'-phosphoryl)serine (serine 1734).

The protein resides in the cytoplasm. It localises to the cytosol. It carries out the reaction 3 malonyl-CoA + acetyl-CoA + NADPH + 3 H(+) = 6-methylsalicylate + 3 CO2 + NADP(+) + 4 CoA + H2O. The protein operates within mycotoxin biosynthesis; patulin biosynthesis. 6-methylsalicylic acid synthase; part of the gene cluster that mediates the biosynthesis of patulin, an acetate-derived tetraketide mycotoxin produced by several fungal species that shows antimicrobial properties against several bacteria. PatK catalyzes the first step of the pathway which is the synthesis of 6-methylsalicylic acid via condensation of 1 acetate and 3 malonate units. The pathway begins with the synthesis of 6-methylsalicylic acid by the polyketide synthase (PKS) patK via condensation of acetate and malonate units. The 6-methylsalicylic acid decarboxylase patG then catalyzes the decarboxylation of 6-methylsalicylic acid to yield m-cresol (also known as 3-methylphenol). These first reactions occur in the cytosol. The intermediate m-cresol is then transported into the endoplasmic reticulum where the cytochrome P450 monooxygenase patH converts it to m-hydroxybenzyl alcohol, which is further converted to gentisyl alcohol by the cytochrome P450 monooxygenase patI. The oxidoreductases patJ and patO further convert gentisyl alcohol to isoepoxydon in the vacuole. PatN catalyzes then the transformation of isoepoxydon into phyllostine. The cluster protein patF is responsible for the conversion from phyllostine to neopatulin whereas the alcohol dehydrogenase patD converts neopatulin to E-ascladiol. The steps between isoepoxydon and E-ascladiol occur in the cytosol, and E-ascladiol is probably secreted to the extracellular space by one of the cluster-specific transporters patC or patM. Finally, the secreted patulin synthase patE catalyzes the conversion of E-ascladiol to patulin. The sequence is that of 6-methylsalicylic acid synthase from Penicillium expansum (Blue mold rot fungus).